We begin with the raw amino-acid sequence, 86 residues long: Small ribosomal subunit protein bS16 (86 aa).

The protein belongs to the bacterial ribosomal protein bS16 family.

The sequence is that of Small ribosomal subunit protein bS16 from Acidithiobacillus ferrooxidans (strain ATCC 23270 / DSM 14882 / CIP 104768 / NCIMB 8455) (Ferrobacillus ferrooxidans (strain ATCC 23270)).